The chain runs to 510 residues: Facilitated glucose transporter protein 1 (510 aa).

Residues 1–29 (MSEKSRSDTSATASLSDSSKSPSSYSTPG) are disordered. Residues 1–46 (MSEKSRSDTSATASLSDSSKSPSSYSTPGTTTQKIIFPDGKLTKCL) lie on the Cytoplasmic side of the membrane. Residues 8–29 (DTSATASLSDSSKSPSSYSTPG) show a composition bias toward low complexity. A helical membrane pass occupies residues 47-67 (AFSAFVITLASFQFGYHIGCV). The Extracellular portion of the chain corresponds to 68-100 (NAPGGLITEWIIGSHKDLFDKELSRENADLAWS). A helical transmembrane segment spans residues 101 to 121 (VAVSVFAVGGMIGGLSSGWLA). At 122–127 (DKVGRR) the chain is on the cytoplasmic side. Residues 128 to 146 (GALFYNNLLALAAAALMGL) traverse the membrane as a helical segment. The Extracellular portion of the chain corresponds to 147 to 160 (AKSVGAYPMVILGR). A helical membrane pass occupies residues 161–181 (LIIGLNCGFSSALVPMFLTEI). Residues 182 to 195 (SPNNLRGMLGSLHQ) are Cytoplasmic-facing. Gln195 contacts D-glucose. Residues 196–216 (LLVTIAILVSQIFGLPHLLGT) form a helical membrane-spanning segment. Residues 217–219 (GDR) lie on the Extracellular side of the membrane. Residues 220–240 (WPLIFAFTVVPAVLQLALLML) traverse the membrane as a helical segment. Residues 241–299 (CPESPKYTMAVRGQRNEAESALKKLRDTEDVSTEIEAMQEEATAAGVQEKPKMGDMFKG) lie on the Cytoplasmic side of the membrane. Residues 300–320 (ALLWPMSIAIMMMLAQQLSGI) form a helical membrane-spanning segment. Residues 315 to 316 (QQ), Asn321, and Asn352 each bind D-glucose. At 321 to 341 (NVAMFYSTVIFRGAGLTGNEP) the chain is on the extracellular side. The chain crosses the membrane as a helical span at residues 342-362 (FYATIGMGAVNVIMTLISVWL). Over 363 to 373 (VDHPKFGRRSL) the chain is Cytoplasmic. Residues 374–394 (LLAGLTGMFVSTLLLVGALTI) traverse the membrane as a helical segment. Topologically, residues 395-409 (QNSGGDKWASYSAIG) are extracellular. Residues 410–430 (FVLLFVISFATGPGAIPWFFV) traverse the membrane as a helical segment. Trp427 lines the D-glucose pocket. The Cytoplasmic segment spans residues 431–445 (SEIFDSSARGNANSI). The chain crosses the membrane as a helical span at residues 446-464 (AVMVNWAANLLVGLTFLPI). At 465–470 (NNLMQQ) the chain is on the extracellular side. Residues 471 to 491 (YSFFIFSGFLAFFIFYTWKFV) traverse the membrane as a helical segment. At 492-510 (PETKGKSIEQIQAEFEKRK) the chain is on the cytoplasmic side.

This sequence belongs to the major facilitator superfamily. Sugar transporter (TC 2.A.1.1) family. Glucose transporter subfamily. In terms of tissue distribution, isoform a is expressed in pharyngeal muscle and intestinal cells in both embryos and adults (at protein level).

It is found in the cell membrane. The protein resides in the basolateral cell membrane. Facilitative glucose transporter that plays a role in glucose metabolism and regulation of longevity. May also play a role in lipid metabolism. Glucose transport activity of isoform a is competitively inhibited by mannose, galactose and fructose, suggesting ability to transport also other hexose sugars. This Caenorhabditis elegans protein is Facilitated glucose transporter protein 1.